A 364-amino-acid chain; its full sequence is Aminomethyltransferase (364 aa).

Belongs to the GcvT family. As to quaternary structure, the glycine cleavage system is composed of four proteins: P, T, L and H.

The catalysed reaction is N(6)-[(R)-S(8)-aminomethyldihydrolipoyl]-L-lysyl-[protein] + (6S)-5,6,7,8-tetrahydrofolate = N(6)-[(R)-dihydrolipoyl]-L-lysyl-[protein] + (6R)-5,10-methylene-5,6,7,8-tetrahydrofolate + NH4(+). Functionally, the glycine cleavage system catalyzes the degradation of glycine. This Proteus mirabilis (strain HI4320) protein is Aminomethyltransferase.